A 371-amino-acid chain; its full sequence is Cytochrome b (371 aa).

The next 4 helical transmembrane spans lie at 25–45 (FGSMLLACTSMQVLTGFFLAV), 69–90 (WMMQNLHAIGASMFFICIYIHI), 105–125 (WLSGTTLLIMLMATAFFGYVL), and 170–190 (FSALHFILSFGIISLLSLHIM). Residues His75 and His89 each coordinate heme b. Residues His174 and His188 each contribute to the heme b site. His193 contributes to the a ubiquinone binding site. A run of 4 helical transmembrane segments spans residues 218–238 (YKDLLMLSLVILMLLMTVSFL), 280–300 (LGGALALAMSIMILLTAPFTH), 312–332 (IMQLMFWTLVATFAVITWSAT), and 339–358 (FTVISQIASTIYFLFLIMNP).

This sequence belongs to the cytochrome b family. As to quaternary structure, the cytochrome bc1 complex contains 3 respiratory subunits (MT-CYB, CYC1 and UQCRFS1), 2 core proteins (UQCRC1 and UQCRC2) and probably 6 low-molecular weight proteins. Requires heme b as cofactor.

The protein localises to the mitochondrion inner membrane. In terms of biological role, component of the ubiquinol-cytochrome c reductase complex (complex III or cytochrome b-c1 complex) that is part of the mitochondrial respiratory chain. The b-c1 complex mediates electron transfer from ubiquinol to cytochrome c. Contributes to the generation of a proton gradient across the mitochondrial membrane that is then used for ATP synthesis. The polypeptide is Cytochrome b (MT-CYB) (Eryx elegans (Central Asian sand boa)).